A 204-amino-acid polypeptide reads, in one-letter code: Protein DESIGUAL 4 (204 aa).

The next 4 membrane-spanning stretches (helical) occupy residues 13 to 33, 60 to 80, 107 to 127, and 143 to 163; these read IITV…VAGF, FVLG…ANVI, CLFL…NGIW, and VFSI…IYYI. Positions 177-204 are disordered; sequence KPNKTKPSELKPIPTEPNEAEPNSTPNP. Asparagine 179 carries an N-linked (GlcNAc...) asparagine glycan.

It belongs to the DESIGUAL family. In terms of tissue distribution, only expressed in inflorescences.

Its subcellular location is the endoplasmic reticulum membrane. The protein is Protein DESIGUAL 4 of Arabidopsis thaliana (Mouse-ear cress).